The primary structure comprises 85 residues: U4-theraphotoxin-Hhn1a (85 aa).

The signal sequence occupies residues M1–A22. Residues E23–R48 constitute a propeptide that is removed on maturation. 3 cysteine pairs are disulfide-bonded: C52-C66, C56-C77, and C71-C82.

This sequence belongs to the neurotoxin 12 (Hwtx-2) family. 02 (Hwtx-2) subfamily. Monomer. In terms of tissue distribution, expressed by the venom gland.

The protein resides in the secreted. Its function is as follows. Neurotoxin active on both insects and mammals. The chain is U4-theraphotoxin-Hhn1a from Cyriopagopus hainanus (Chinese bird spider).